A 384-amino-acid polypeptide reads, in one-letter code: Sphingosine 1-phosphate receptor 4 (384 aa).

The Extracellular segment spans residues 1 to 50 (MNATGTPVAPESCQQLAAGGHSRLIVLHYNHSGRLAGRGGPEDGGLGALR). Residues Asn2 and Asn30 are each glycosylated (N-linked (GlcNAc...) asparagine). Residues 51-71 (GLSVAASCLVVLENLLVLAAI) traverse the membrane as a helical segment. Topologically, residues 72–84 (TSHMRSRRWVYYC) are cytoplasmic. The chain crosses the membrane as a helical span at residues 85–105 (LVNITLSDLLTGAAYLANVLL). The Extracellular segment spans residues 106–117 (SGARTFRLAPAQ). The chain crosses the membrane as a helical span at residues 118–138 (WFLREGLLFTALAASTFSLLF). The Cytoplasmic segment spans residues 139-161 (TAGERFATMVRPVAESGATKTSR). A helical transmembrane segment spans residues 162–182 (VYGFIGLCWLLAALLGMLPLL). The Extracellular segment spans residues 183–206 (GWNCLCAFDRCSSLLPLYSKRYIL). Residues 207-227 (FCLVIFAGVLATIMGLYGAIF) form a helical membrane-spanning segment. Topologically, residues 228–252 (RLVQASGQKAPRPAARRKARRLLKT) are cytoplasmic. The helical transmembrane segment at 253 to 273 (VLMILLAFLVCWGPLFGLLLA) threads the bilayer. The Extracellular portion of the chain corresponds to 274–288 (DVFGSNLWAQEYLRG). A helical membrane pass occupies residues 289–309 (MDWILALAVLNSAVNPIIYSF). The Cytoplasmic segment spans residues 310 to 384 (RSREVCRAVL…LSSISSVRSI (75 aa)). Cys323 carries the S-palmitoyl cysteine lipid modification.

Belongs to the G-protein coupled receptor 1 family. In terms of tissue distribution, specifically expressed in fetal and adult lymphoid and hematopoietic tissue as well as in lung. Considerable level of expression in adult and fetal spleen as well as adult peripheral leukocytes and lung. Lower expression in adult thymus, lymph node, bone marrow, and appendix as well as in fetal liver, thymus, and lung.

Its subcellular location is the cell membrane. Receptor for the lysosphingolipid sphingosine 1-phosphate (S1P). S1P is a bioactive lysophospholipid that elicits diverse physiological effect on most types of cells and tissues. May be involved in cell migration processes that are specific for lymphocytes. The sequence is that of Sphingosine 1-phosphate receptor 4 (S1PR4) from Homo sapiens (Human).